The primary structure comprises 155 residues: Regulatory protein RecX (155 aa).

Belongs to the RecX family.

The protein localises to the cytoplasm. Its function is as follows. Modulates RecA activity. The polypeptide is Regulatory protein RecX (Pseudomonas savastanoi pv. phaseolicola (strain 1448A / Race 6) (Pseudomonas syringae pv. phaseolicola (strain 1448A / Race 6))).